A 298-amino-acid polypeptide reads, in one-letter code: ADP/ATP translocase 3 (298 aa).

Residue M1 is modified to N-acetylmethionine. Topologically, residues M1–S7 are mitochondrial intermembrane. N-acetylthreonine; in ADP/ATP translocase 3, N-terminally processed is present on T2. Residues I6 to I98 form a Solcar 1 repeat. The helical transmembrane segment at F8–Q37 threads the bilayer. The Mitochondrial matrix segment spans residues V38–N74. N6,N6,N6-trimethyllysine is present on K52. Residues L75–F99 traverse the membrane as a helical segment. The ADP site is built by R80 and K92. Topologically, residues L100–F109 are mitochondrial intermembrane. The residue at position 105 (K105) is an N6-acetyllysine. A helical membrane pass occupies residues W110–F130. 2 Solcar repeats span residues R111 to M201 and V212 to V297. Topologically, residues V131–N178 are mitochondrial matrix. The chain crosses the membrane as a helical span at residues V179–K199. The Mitochondrial intermembrane portion of the chain corresponds to G200 to I210. A helical transmembrane segment spans residues V211–F231. At D232 to G273 the chain is on the mitochondrial matrix side. ADP is bound at residue R235. The tract at residues R235–M240 is important for transport activity. The Nucleotide carrier signature motif signature appears at R235 to M240. K268 is subject to N6-acetyllysine. The helical transmembrane segment at A274–Y291 threads the bilayer. Residues D292 to I298 are Mitochondrial intermembrane-facing.

It belongs to the mitochondrial carrier (TC 2.A.29) family. As to quaternary structure, monomer. Found in a complex with ARL2, ARL2BP and SLC25A6/ANT3. Post-translationally, trimethylated by ANTKMT at Lys-52.

It is found in the mitochondrion inner membrane. The protein localises to the membrane. It catalyses the reaction ADP(in) + ATP(out) = ADP(out) + ATP(in). It carries out the reaction H(+)(in) = H(+)(out). Its activity is regulated as follows. The matrix-open state (m-state) is inhibited by the membrane-permeable bongkrekic acid (BKA). The cytoplasmic-open state (c-state) is inhibited by the membrane-impermeable toxic inhibitor carboxyatractyloside (CATR). Proton transporter activity is inhibited by ADP:ATP antiporter activity. In terms of biological role, ADP:ATP antiporter that mediates import of ADP into the mitochondrial matrix for ATP synthesis, and export of ATP out to fuel the cell. Cycles between the cytoplasmic-open state (c-state) and the matrix-open state (m-state): operates by the alternating access mechanism with a single substrate-binding site intermittently exposed to either the cytosolic (c-state) or matrix (m-state) side of the inner mitochondrial membrane. In addition to its ADP:ATP antiporter activity, also involved in mitochondrial uncoupling and mitochondrial permeability transition pore (mPTP) activity. Plays a role in mitochondrial uncoupling by acting as a proton transporter: proton transport uncouples the proton flows via the electron transport chain and ATP synthase to reduce the efficiency of ATP production and cause mitochondrial thermogenesis. Proton transporter activity is inhibited by ADP:ATP antiporter activity, suggesting that SLC25A6/ANT3 acts as a master regulator of mitochondrial energy output by maintaining a delicate balance between ATP production (ADP:ATP antiporter activity) and thermogenesis (proton transporter activity). Proton transporter activity requires free fatty acids as cofactor, but does not transport it. Also plays a key role in mPTP opening, a non-specific pore that enables free passage of the mitochondrial membranes to solutes of up to 1.5 kDa, and which contributes to cell death. It is however unclear if SLC25A6/ANT3 constitutes a pore-forming component of mPTP or regulates it. This is ADP/ATP translocase 3 from Bos taurus (Bovine).